We begin with the raw amino-acid sequence, 425 residues long: MLDLKRIRTDFDTVAAKLKNRGVSEDTLTHLKELDEKRRTLLVQSEELKAERNIASAAIAQAKRQKEDATQQIADMQKVSADIKTIDNQLVAIDQQVTDIITVLPNTPHDSVPVGADEEDNVEIRRWGTPRDFDFEVKAHWDLGEDLDILDWERGAKVTGARFLFYKNLGARLERALYNFMLDEHIKEGYQEIITPYMVNHDSMFGTGQYPKFKEDTFELADTNFVLIPTAEVPLTNYYRGEILDGKELPIYFTAMSPSFRSEAGSAGRDTRGLIRLHQFHKVEMVKFAKPEESYQELEKMTANAENILQKLGLPYRVISLCTGDMGFSAAKTYDLEVWIPAQNTYREISSCSNTEDFQARRAQIRYRDEADGKVKLLHTLNGSGLAVGRTVAAILENYQNEDGSVTIPEVLRPYMGGETVISPK.

230–232 (TAE) contacts L-serine. Position 261 to 263 (261 to 263 (RSE)) interacts with ATP. E284 serves as a coordination point for L-serine. 348–351 (EISS) lines the ATP pocket. S384 is a binding site for L-serine.

The protein belongs to the class-II aminoacyl-tRNA synthetase family. Type-1 seryl-tRNA synthetase subfamily. In terms of assembly, homodimer. The tRNA molecule binds across the dimer.

It is found in the cytoplasm. The catalysed reaction is tRNA(Ser) + L-serine + ATP = L-seryl-tRNA(Ser) + AMP + diphosphate + H(+). The enzyme catalyses tRNA(Sec) + L-serine + ATP = L-seryl-tRNA(Sec) + AMP + diphosphate + H(+). It functions in the pathway aminoacyl-tRNA biosynthesis; selenocysteinyl-tRNA(Sec) biosynthesis; L-seryl-tRNA(Sec) from L-serine and tRNA(Sec): step 1/1. Its function is as follows. Catalyzes the attachment of serine to tRNA(Ser). Is also able to aminoacylate tRNA(Sec) with serine, to form the misacylated tRNA L-seryl-tRNA(Sec), which will be further converted into selenocysteinyl-tRNA(Sec). This chain is Serine--tRNA ligase, found in Streptococcus pyogenes serotype M4 (strain MGAS10750).